Reading from the N-terminus, the 150-residue chain is Avidin-related protein 2 (150 aa).

The N-terminal stretch at methionine 1 to serine 24 is a signal peptide. Positions arginine 26–threonine 147 constitute an Avidin-like domain. Cysteine 28 and cysteine 105 are joined by a disulfide. Asparagine 36, serine 40, tyrosine 57, threonine 59, and aspartate 63 together coordinate biotin. N-linked (GlcNAc...) asparagine glycans are attached at residues asparagine 67 and asparagine 93. Residues serine 95, serine 99, and asparagine 140 each coordinate biotin.

As to quaternary structure, homotetramer. Post-translationally, glycosylated.

Its subcellular location is the secreted. In terms of biological role, forms a strong non-covalent specific complex with biotin. This Gallus gallus (Chicken) protein is Avidin-related protein 2 (AVR2).